We begin with the raw amino-acid sequence, 453 residues long: TATA box-binding protein-associated factor RNA polymerase I subunit A (453 aa).

As to quaternary structure, component of the transcription factor SL1/TIF-IB complex, composed of TBP and at least TAF1A, TAF1B, TAF1C and TAF1D. In the complex interacts directly with TBP, TAF1A and TAF1B. Interaction of the SL1/TIF-IB subunits with TBP excludes interaction of TBP with the transcription factor IID (TFIID) subunits. Interacts with UBFT. Interacts with CEBPA (isoform 1 and isoform 4). Part of Pol I pre-initiation complex (PIC), in which Pol I core assembles with RRN3 and promoter-bound UTBF and SL1/TIF-IB complex.

The protein localises to the nucleus. It localises to the nucleolus. In terms of biological role, component of the transcription factor SL1/TIF-IB complex, which is involved in the assembly of the PIC (pre-initiation complex) during RNA polymerase I-dependent transcription. The rate of PIC formation probably is primarily dependent on the rate of association of SL1/TIF-IB with the rDNA promoter. SL1/TIF-IB is involved in stabilization of nucleolar transcription factor 1/UBTF on rDNA. Formation of SL1/TIF-IB excludes the association of TBP with TFIID subunits. This chain is TATA box-binding protein-associated factor RNA polymerase I subunit A (Taf1a), found in Mus musculus (Mouse).